Reading from the N-terminus, the 284-residue chain is Tryptophan synthase alpha chain (284 aa).

Residues Glu-59 and Asp-70 each act as proton acceptor in the active site.

It belongs to the TrpA family. In terms of assembly, tetramer of two alpha and two beta chains.

It catalyses the reaction (1S,2R)-1-C-(indol-3-yl)glycerol 3-phosphate + L-serine = D-glyceraldehyde 3-phosphate + L-tryptophan + H2O. Its pathway is amino-acid biosynthesis; L-tryptophan biosynthesis; L-tryptophan from chorismate: step 5/5. Its function is as follows. The alpha subunit is responsible for the aldol cleavage of indoleglycerol phosphate to indole and glyceraldehyde 3-phosphate. The protein is Tryptophan synthase alpha chain of Azospirillum brasilense.